The sequence spans 432 residues: Glial fibrillary acidic protein (432 aa).

The segment at 1–72 is head; that stretch reads MERRRITSAA…KETRASERAE (72 aa). Phosphothreonine; by AURKB and ROCK1 is present on Thr-7. Position 12 is an omega-N-methylarginine (Arg-12). Ser-13 bears the Phosphoserine; by AURKB and ROCK1 mark. A citrulline mark is found at Arg-30 and Arg-36. A Phosphoserine; by AURKB and ROCK1 modification is found at Ser-38. The region spanning 69–377 is the IF rod domain; that stretch reads ERAEMMELND…KLLEGEENRI (309 aa). Residues 73–104 form a coil 1A region; the sequence is MMELNDRFASYIEKVRFLEQQNKALAAELNQL. Ser-82 is subject to Phosphoserine. Positions 105-115 are linker 1; sequence RAKEPTKLADV. Phosphothreonine occurs at positions 110 and 150. A coil 1B region spans residues 116–214; the sequence is YQAELRELRL…EEEVRELQEQ (99 aa). Positions 215-230 are linker 12; sequence LARQQVHVELDMAKPD. A coil 2A region spans residues 231–252; sequence LTAALKEIRTQYEAMASSNMHE. Residues 253-256 form a linker 2 region; it reads AEEW. Positions 257–377 are coil 2B; the sequence is YRSKFADLTD…KLLEGEENRI (121 aa). Arg-270 carries the citrulline modification. Ser-323 bears the Phosphoserine mark. Positions 378–432 are tail; sequence TIPVQTFSNLQIRETSLDTKSVSEGHLKRNIVVKTVEMRDGEVIKESKQEHKDVM. Thr-383 is modified (phosphothreonine). Position 385 is a phosphoserine (Ser-385). Arg-406 and Arg-416 each carry citrulline.

Belongs to the intermediate filament family. As to quaternary structure, interacts with SYNM. In terms of processing, phosphorylated by PKN1.

Its subcellular location is the cytoplasm. Functionally, GFAP, a class-III intermediate filament, is a cell-specific marker that, during the development of the central nervous system, distinguishes astrocytes from other glial cells. The sequence is that of Glial fibrillary acidic protein (GFAP) from Pongo abelii (Sumatran orangutan).